The chain runs to 228 residues: MTVYKQRFVLDTTAFTDRGVVDELGDGDLCEAVTRLLDLIGRARMELAISCYIPYPTVYRELKGFLERNGCPELLSRIDTWIVKKTPNRYEVKVPARLFMAYVKDMRERLDRGRKRAEKAIWEAALEAYEIMLREEADVPKERIIREVIGETVRRFRRKYRQTVRHGTLDSAPDLDVLLLAKELDAAVVASDEGIERWARELGLRFMPACSFPDMIEEYLRMSREVEG.

Belongs to the HARP family.

It carries out the reaction Endonucleolytic cleavage of RNA, removing 5'-extranucleotides from tRNA precursor.. Functionally, RNA-free RNase P that catalyzes the removal of the 5'-leader sequence from pre-tRNA to produce the mature 5'-terminus. The protein is RNA-free ribonuclease P of Methanopyrus kandleri (strain AV19 / DSM 6324 / JCM 9639 / NBRC 100938).